The following is a 106-amino-acid chain: Minor capsid protein VP2 (106 aa).

This sequence belongs to the vesivirus VP2 protein family. In terms of assembly, homooligomer. The portal-like structure consists in 12 copies of VP2. Interacts with capsid protein VP1.

The protein localises to the virion. It is found in the host cytoplasm. In terms of biological role, minor structural protein that forms a portal-like structure at a unique three-fold axis of symmetry, following binding to the host receptor. The virion attaches to feline junctional adhesion molecule A (F11R). Once attached, the virion is endocytosed. Acidification of the endosome induces conformational change of capsid protein thereby injecting virus genomic RNA into host cytoplasm. The channel formed by VP2 may allow the delivery of the viral genome through the host endosomal membrane. The sequence is that of Minor capsid protein VP2 from Feline calicivirus (strain CFI/68 FIV) (FCV).